We begin with the raw amino-acid sequence, 289 residues long: Thiazole synthase (289 aa).

Catalysis depends on Lys132, which acts as the Schiff-base intermediate with DXP. 1-deoxy-D-xylulose 5-phosphate is bound by residues Gly193, 219 to 220 (AG), and 241 to 242 (NT).

This sequence belongs to the ThiG family. In terms of assembly, homotetramer. Forms heterodimers with either ThiH or ThiS.

The protein localises to the cytoplasm. The catalysed reaction is [ThiS sulfur-carrier protein]-C-terminal-Gly-aminoethanethioate + 2-iminoacetate + 1-deoxy-D-xylulose 5-phosphate = [ThiS sulfur-carrier protein]-C-terminal Gly-Gly + 2-[(2R,5Z)-2-carboxy-4-methylthiazol-5(2H)-ylidene]ethyl phosphate + 2 H2O + H(+). Its pathway is cofactor biosynthesis; thiamine diphosphate biosynthesis. Catalyzes the rearrangement of 1-deoxy-D-xylulose 5-phosphate (DXP) to produce the thiazole phosphate moiety of thiamine. Sulfur is provided by the thiocarboxylate moiety of the carrier protein ThiS. In vitro, sulfur can be provided by H(2)S. This Rhodospirillum rubrum (strain ATCC 11170 / ATH 1.1.1 / DSM 467 / LMG 4362 / NCIMB 8255 / S1) protein is Thiazole synthase.